The chain runs to 199 residues: dITP/XTP pyrophosphatase (199 aa).

7-12 (SNNPGK) is a binding site for substrate. The active-site Proton acceptor is the aspartate 68. Residue aspartate 68 participates in Mg(2+) binding. Substrate-binding positions include alanine 69, 154-157 (FGFD), lysine 177, and 182-183 (HR).

It belongs to the HAM1 NTPase family. In terms of assembly, homodimer. Requires Mg(2+) as cofactor.

It catalyses the reaction XTP + H2O = XMP + diphosphate + H(+). The catalysed reaction is dITP + H2O = dIMP + diphosphate + H(+). The enzyme catalyses ITP + H2O = IMP + diphosphate + H(+). Functionally, pyrophosphatase that catalyzes the hydrolysis of nucleoside triphosphates to their monophosphate derivatives, with a high preference for the non-canonical purine nucleotides XTP (xanthosine triphosphate), dITP (deoxyinosine triphosphate) and ITP. Seems to function as a house-cleaning enzyme that removes non-canonical purine nucleotides from the nucleotide pool, thus preventing their incorporation into DNA/RNA and avoiding chromosomal lesions. The polypeptide is dITP/XTP pyrophosphatase (Verminephrobacter eiseniae (strain EF01-2)).